The sequence spans 260 residues: MIIVLSPAKSLDYETPPHVSHHTQPQFADDAAALIDELRRLSPQQIGTLMSISDPLARLNFQRYADWSRASTPANAKQAVLAFNGDVYEGLDARSLSPDDLDYAQRHVRVLSGLYGLLRPLDLLQPYRLEMGTRFSNARGKDLYAFWGERITHALNAELKTRVGASRVLVNCASAEYFKSVKPKLLDARVVTPVFEDWKDGRYKIISFHAKRARGLMARYVVEGRIDSPDALKDFASEGYAFDASASNDDTYVFRRRAGA.

This sequence belongs to the UPF0246 family.

This Burkholderia pseudomallei (strain 668) protein is UPF0246 protein BURPS668_1321.